The following is a 152-amino-acid chain: NAD(P)H-quinone oxidoreductase subunit N (152 aa).

This sequence belongs to the complex I NdhN subunit family. As to quaternary structure, NDH-1 can be composed of about 15 different subunits; different subcomplexes with different compositions have been identified which probably have different functions.

The protein localises to the cellular thylakoid membrane. The catalysed reaction is a plastoquinone + NADH + (n+1) H(+)(in) = a plastoquinol + NAD(+) + n H(+)(out). The enzyme catalyses a plastoquinone + NADPH + (n+1) H(+)(in) = a plastoquinol + NADP(+) + n H(+)(out). Its function is as follows. NDH-1 shuttles electrons from an unknown electron donor, via FMN and iron-sulfur (Fe-S) centers, to quinones in the respiratory and/or the photosynthetic chain. The immediate electron acceptor for the enzyme in this species is believed to be plastoquinone. Couples the redox reaction to proton translocation, and thus conserves the redox energy in a proton gradient. Cyanobacterial NDH-1 also plays a role in inorganic carbon-concentration. The protein is NAD(P)H-quinone oxidoreductase subunit N of Prochlorococcus marinus (strain SARG / CCMP1375 / SS120).